The primary structure comprises 514 residues: Putative fucosyltransferase 10 (514 aa).

N-linked (GlcNAc...) asparagine glycans are attached at residues asparagine 185, asparagine 210, asparagine 355, asparagine 377, and asparagine 456.

Belongs to the glycosyltransferase 37 family. Expressed in root, leaves, stems and seedlings.

It localises to the golgi apparatus. It functions in the pathway protein modification; protein glycosylation. In terms of biological role, may be involved in cell wall biosynthesis. May act as a fucosyltransferase. This chain is Putative fucosyltransferase 10 (FUT10), found in Arabidopsis thaliana (Mouse-ear cress).